Reading from the N-terminus, the 134-residue chain is Bradykinin-related peptides (134 aa).

The signal sequence occupies residues 1–22 (MAFLKKSLFLVLFLGVVSLSFC). 3 propeptides span residues 23 to 44 (EEEKREEHEEEKRDEEDAESLG), 71 to 82 (RSISGLTPIRLS), and 99 to 121 (ISEADPGFTPSFVVIKGLSPLRG). Basic and acidic residues predominate over residues 24–33 (EEKREEHEEE). The interval 24–71 (EEKREEHEEEKRDEEDAESLGKRYGGLSPLRISKRVPPGFTPFRSPAR) is disordered. Proline 126 is modified (4-hydroxyproline; partial; in form [Hyp3]-bradykinin and [Hyp3]-bradykinin-Val,Asp).

The protein belongs to the frog skin active peptide (FSAP) family. Bradykinin-related peptide subfamily. As to expression, expressed by the skin glands. Expression levels in inguinal glands are much higher than in granular glands.

The protein resides in the secreted. In terms of biological role, may produce in vitro relaxation of rat arterial smooth muscle and constriction of intestinal smooth muscle. May target bradykinin receptors (BDKRB). This chain is Bradykinin-related peptides, found in Physalaemus nattereri (Cuyaba dwarf frog).